We begin with the raw amino-acid sequence, 451 residues long: F-box/LRR-repeat protein 13 (451 aa).

Positions valine 17 to phenylalanine 70 constitute an F-box domain. 4 LRR repeats span residues aspartate 128–glycine 155, threonine 177–arginine 202, valine 224–aspartate 251, and cysteine 335–serine 363. One can recognise an FBD domain in the interval glycine 370–leucine 421.

The polypeptide is F-box/LRR-repeat protein 13 (FBL13) (Arabidopsis thaliana (Mouse-ear cress)).